The sequence spans 114 residues: T cell receptor alpha variable 24 (114 aa).

A signal peptide spans 1–22 (MEKNPLAAPLLILWFHLDCVSS). The region spanning 23 to 114 (ILNVEQSPQS…EDSATYLCAF (92 aa)) is the Ig-like domain. N-linked (GlcNAc...) asparagine glycosylation is present at Asn42. A disulfide bond links Cys45 and Cys112.

As to quaternary structure, alpha-beta TR is a heterodimer composed of an alpha and beta chain; disulfide-linked. The alpha-beta TR is associated with the transmembrane signaling CD3 coreceptor proteins to form the TR-CD3 (TcR or TCR). The assembly of alpha-beta TR heterodimers with CD3 occurs in the endoplasmic reticulum where a single alpha-beta TR heterodimer associates with one CD3D-CD3E heterodimer, one CD3G-CD3E heterodimer and one CD247 homodimer forming a stable octameric structure. CD3D-CD3E and CD3G-CD3E heterodimers preferentially associate with TR alpha and TR beta chains, respectively. The association of the CD247 homodimer is the last step of TcR assembly in the endoplasmic reticulum and is required for transport to the cell surface.

It localises to the cell membrane. Its function is as follows. V region of the variable domain of T cell receptor (TR) alpha chain that participates in the antigen recognition. Alpha-beta T cell receptors are antigen specific receptors which are essential to the immune response and are present on the cell surface of T lymphocytes. Recognize peptide-major histocompatibility (MH) (pMH) complexes that are displayed by antigen presenting cells (APC), a prerequisite for efficient T cell adaptive immunity against pathogens. Binding of alpha-beta TR to pMH complex initiates TR-CD3 clustering on the cell surface and intracellular activation of LCK that phosphorylates the ITAM motifs of CD3G, CD3D, CD3E and CD247 enabling the recruitment of ZAP70. In turn ZAP70 phosphorylates LAT, which recruits numerous signaling molecules to form the LAT signalosome. The LAT signalosome propagates signal branching to three major signaling pathways, the calcium, the mitogen-activated protein kinase (MAPK) kinase and the nuclear factor NF-kappa-B (NF-kB) pathways, leading to the mobilization of transcription factors that are critical for gene expression and essential for T cell growth and differentiation. The T cell repertoire is generated in the thymus, by V-(D)-J rearrangement. This repertoire is then shaped by intrathymic selection events to generate a peripheral T cell pool of self-MH restricted, non-autoaggressive T cells. Post-thymic interaction of alpha-beta TR with the pMH complexes shapes TR structural and functional avidity. The chain is T cell receptor alpha variable 24 from Homo sapiens (Human).